A 295-amino-acid chain; its full sequence is UDP-N-acetylenolpyruvoylglucosamine reductase (295 aa).

The FAD-binding PCMH-type domain maps to 24–188 (KVGGNAEIFF…LKVVFKINKG (165 aa)). Residue arginine 168 is part of the active site. Serine 217 functions as the Proton donor in the catalytic mechanism. Glutamate 287 is an active-site residue.

The protein belongs to the MurB family. FAD is required as a cofactor.

Its subcellular location is the cytoplasm. The enzyme catalyses UDP-N-acetyl-alpha-D-muramate + NADP(+) = UDP-N-acetyl-3-O-(1-carboxyvinyl)-alpha-D-glucosamine + NADPH + H(+). It functions in the pathway cell wall biogenesis; peptidoglycan biosynthesis. In terms of biological role, cell wall formation. The protein is UDP-N-acetylenolpyruvoylglucosamine reductase of Rickettsia peacockii (strain Rustic).